A 276-amino-acid polypeptide reads, in one-letter code: Cell division protein FtsQ (276 aa).

Residues 1–11 (MQYILKLKYYL) lie on the Cytoplasmic side of the membrane. The helical transmembrane segment at 12–32 (YNITWKLVFICVMLVLLIVGI) threads the bilayer. The Periplasmic portion of the chain corresponds to 33–276 (HKNIKWVCDY…NVSKGSHDYD (244 aa)). In terms of domain architecture, POTRA spans 45–115 (GPLSYIIVTG…NTLKINLIEY (71 aa)).

The protein belongs to the FtsQ/DivIB family. FtsQ subfamily. In terms of assembly, part of a complex composed of FtsB, FtsL and FtsQ.

The protein localises to the cell inner membrane. Its function is as follows. Essential cell division protein. May link together the upstream cell division proteins, which are predominantly cytoplasmic, with the downstream cell division proteins, which are predominantly periplasmic. May control correct divisome assembly. This chain is Cell division protein FtsQ, found in Blochmanniella floridana.